The sequence spans 298 residues: Lipoyl synthase (298 aa).

7 residues coordinate [4Fe-4S] cluster: C40, C45, C51, C67, C71, C74, and S280. The Radical SAM core domain occupies 53–269; the sequence is AVRRTATFMI…KEIAMAKGFS (217 aa).

This sequence belongs to the radical SAM superfamily. Lipoyl synthase family. [4Fe-4S] cluster serves as cofactor.

Its subcellular location is the cytoplasm. It catalyses the reaction [[Fe-S] cluster scaffold protein carrying a second [4Fe-4S](2+) cluster] + N(6)-octanoyl-L-lysyl-[protein] + 2 oxidized [2Fe-2S]-[ferredoxin] + 2 S-adenosyl-L-methionine + 4 H(+) = [[Fe-S] cluster scaffold protein] + N(6)-[(R)-dihydrolipoyl]-L-lysyl-[protein] + 4 Fe(3+) + 2 hydrogen sulfide + 2 5'-deoxyadenosine + 2 L-methionine + 2 reduced [2Fe-2S]-[ferredoxin]. It participates in protein modification; protein lipoylation via endogenous pathway; protein N(6)-(lipoyl)lysine from octanoyl-[acyl-carrier-protein]. Its function is as follows. Catalyzes the radical-mediated insertion of two sulfur atoms into the C-6 and C-8 positions of the octanoyl moiety bound to the lipoyl domains of lipoate-dependent enzymes, thereby converting the octanoylated domains into lipoylated derivatives. In Bacillus pumilus (strain SAFR-032), this protein is Lipoyl synthase.